The primary structure comprises 545 residues: E3 ubiquitin-protein ligase ipaH9.8 (545 aa).

The interval Met1–Met242 is interaction with target proteins. 8 LRR repeats span residues Asn57–Ala77, Gln78–Leu99, Lys100–Pro117, Ala118–Leu139, Leu140–Gln157, Ala158–Asn179, Val182–Leu203, and Asn205–Thr228. Residues Ser243 to Leu250 are linker. The segment at His251–Ser545 is E3 ubiquitin-protein ligase catalytic domain. The NEL domain occupies Pro253–Ser545. Cys337 acts as the Glycyl thioester intermediate in catalysis.

It belongs to the LRR-containing bacterial E3 ligase family. As to quaternary structure, also interacts with human and mouse U2AF1 (U2AF35). Post-translationally, ubiquitinated in the presence of host E1 ubiquitin-activating enzyme, E2 ubiquitin-conjugating enzyme and ubiquitin.

The protein localises to the secreted. The protein resides in the host cytoplasm. Its subcellular location is the host nucleus. It carries out the reaction S-ubiquitinyl-[E2 ubiquitin-conjugating enzyme]-L-cysteine + [acceptor protein]-L-lysine = [E2 ubiquitin-conjugating enzyme]-L-cysteine + N(6)-ubiquitinyl-[acceptor protein]-L-lysine.. Exists in an autoinhibited state in the absence of substrate protein, due to interactions of the leucine-rich repeats with NEL domain. Is activated upon binding to a substrate protein. In terms of biological role, effector E3 ubiquitin ligase that interferes with host's ubiquitination pathway and modulates the acute inflammatory responses, thus facilitating bacterial colonization within the host cell. Interacts with IKBKG (NEMO) and TNIP1 (ABIN-1), a ubiquitin-binding adapter protein, which results in TNIP1-dependent 'Lys-27'-linked polyubiquitination of IKBKG. Consequently, polyubiquitinated IKBKG undergoes proteasome-dependent degradation, which perturbs NF-kappa-B activation during bacterial infection. Mediates polyubiquitination of host U2AF1, leading to its proteasomal degradation. Catalyzes 'Lys-48'-linked polyubiquitination and subsequent degradation of a subset of host guanylate-binding proteins (GBP1, GBP2, GBP4 and GBP6), thereby suppressing host cell defense. In contrast, host GBP3 and GBP7 are not ubiquitinated by IpaH9.8. Uses UBE2D2 (UBCH5B) as an E2 ubiquitin-conjugating enzyme. This chain is E3 ubiquitin-protein ligase ipaH9.8 (ipaH9.8), found in Shigella flexneri serotype X (strain 2002017).